Consider the following 509-residue polypeptide: Dihydrolipoyl dehydrogenase, mitochondrial (509 aa).

A mitochondrion-targeting transit peptide spans 1–35 (MQSWSRVYCSLAKKGHFNRLSHGLQGASSVPLRTY). An N6-acetyllysine; alternate modification is found at lysine 66. Lysine 66 carries the post-translational modification N6-succinyllysine; alternate. FAD-binding positions include 71–80 (EKNETLGGTC) and lysine 89. A disulfide bond links cysteine 80 and cysteine 85. Lysine 104, lysine 122, lysine 132, and lysine 143 each carry N6-acetyllysine; alternate. N6-succinyllysine; alternate occurs at positions 104, 122, 132, and 143. Position 154 (glycine 154) interacts with FAD. The residue at position 159 (lysine 159) is an N6-succinyllysine. 183-185 (TGS) is a binding site for FAD. NAD(+) contacts are provided by residues 220 to 227 (GAGVIGVE) and glutamate 243. N6-succinyllysine occurs at positions 273 and 277. Position 278 (valine 278) interacts with NAD(+). Residues serine 285 and serine 297 each carry the phosphoserine modification. Residue glycine 314 coordinates NAD(+). Lysine 346 is subject to N6-acetyllysine. FAD contacts are provided by residues aspartate 355 and 361–364 (MLAH). Residue lysine 410 is modified to N6-acetyllysine; alternate. Lysine 410 is subject to N6-succinyllysine; alternate. Residues lysine 417 and lysine 420 each carry the N6-acetyllysine modification. The residue at position 430 (lysine 430) is an N6-succinyllysine. The active-site Proton acceptor is histidine 487. Serine 502 is subject to Phosphoserine. Lysine 505 is subject to N6-acetyllysine; alternate. An N6-succinyllysine; alternate modification is found at lysine 505.

Belongs to the class-I pyridine nucleotide-disulfide oxidoreductase family. In terms of assembly, homodimer. Part of the multimeric pyruvate dehydrogenase complex that contains multiple copies of pyruvate dehydrogenase (subunits PDHA (PDHA1 or PDHA2) and PDHB, E1), dihydrolipoamide acetyltransferase (DLAT, E2) and lipoamide dehydrogenase (DLD, E3). These subunits are bound to an inner core composed of about 48 DLAT and 12 PDHX molecules (by non covalent bonds). The 2-oxoglutarate dehydrogenase complex is composed of OGDH (2-oxoglutarate dehydrogenase; E1), DLST (dihydrolipoamide succinyltransferase; E2), DLD (dihydrolipoamide dehydrogenase; E3) and the assembly factor KGD4. It contains multiple copies of the three enzymatic components (E1, E2 and E3). In the nucleus, the 2-oxoglutarate dehydrogenase complex associates with KAT2A. Interacts with PDHX. Requires FAD as cofactor. In terms of processing, tyrosine phosphorylated.

The protein resides in the mitochondrion matrix. Its subcellular location is the nucleus. It is found in the cell projection. It localises to the cilium. The protein localises to the flagellum. The protein resides in the cytoplasmic vesicle. Its subcellular location is the secretory vesicle. It is found in the acrosome. It carries out the reaction N(6)-[(R)-dihydrolipoyl]-L-lysyl-[protein] + NAD(+) = N(6)-[(R)-lipoyl]-L-lysyl-[protein] + NADH + H(+). Functionally, lipoamide dehydrogenase is a component of the glycine cleavage system as well as an E3 component of three alpha-ketoacid dehydrogenase complexes (pyruvate-, alpha-ketoglutarate-, and branched-chain amino acid-dehydrogenase complex). The 2-oxoglutarate dehydrogenase complex is mainly active in the mitochondrion. A fraction of the 2-oxoglutarate dehydrogenase complex also localizes in the nucleus and is required for lysine succinylation of histones: associates with KAT2A on chromatin and provides succinyl-CoA to histone succinyltransferase KAT2A. In monomeric form may have additional moonlighting function as serine protease. Involved in the hyperactivation of spermatazoa during capacitation and in the spermatazoal acrosome reaction. This chain is Dihydrolipoyl dehydrogenase, mitochondrial (Dld), found in Rattus norvegicus (Rat).